A 159-amino-acid polypeptide reads, in one-letter code: UPF0262 protein PHZ_c2197 (159 aa).

The protein belongs to the UPF0262 family.

The sequence is that of UPF0262 protein PHZ_c2197 from Phenylobacterium zucineum (strain HLK1).